Here is a 493-residue protein sequence, read N- to C-terminus: Beta-amyrin 11-oxidase (493 aa).

The helical transmembrane segment at 7–23 threads the bilayer; it reads CMSAATLLVCYIFGSKF. Position 439 (Cys439) interacts with heme.

Belongs to the cytochrome P450 family. It depends on heme as a cofactor. As to expression, expressed in roots and stolons. Not detected in leaves and stems.

The protein resides in the membrane. The catalysed reaction is beta-amyrin + 2 reduced [NADPH--hemoprotein reductase] + 2 O2 = 11-oxo-beta-amyrin + 2 oxidized [NADPH--hemoprotein reductase] + 3 H2O + 2 H(+). It catalyses the reaction beta-amyrin + reduced [NADPH--hemoprotein reductase] + O2 = 11alpha-hydroxy-beta-amyrin + oxidized [NADPH--hemoprotein reductase] + H2O + H(+). It carries out the reaction 11alpha-hydroxy-beta-amyrin + reduced [NADPH--hemoprotein reductase] + O2 = 11-oxo-beta-amyrin + oxidized [NADPH--hemoprotein reductase] + 2 H2O + H(+). Its function is as follows. Involved in the biosynthesis of Glycyrrhetinic acid (GA), a natural product which exhibits anti-inflammatory activity. Catalyzes 2 successive oxidations of beta-amyrin, producing a precursor of the triterpene sweetener glycyrrhizin. Unable to use 11-deoxoglycyrrhetinic acid or ent-kaurenoic acid as substrates. The sequence is that of Beta-amyrin 11-oxidase from Glycyrrhiza uralensis (Chinese licorice).